Here is a 415-residue protein sequence, read N- to C-terminus: MAESKNNKKRCSFCGRSENEVGFLITGMNGYICDSCATQAYEITQEAMGAGKQSAGATRLNLKELPKPVEIKNFLDQYVIGQDDAKRFLAVSVYNHYKRLLQKDSGDDVEIEKSNIIMVGSTGTGKTLLARTIAKLLHVPFTIVDATVLTEAGYVGEDIESILTRLLQVADYNVPEAEQGIVFIDEIDKIARKGDNPSITRDVSGEGVQQGLLKLLEGSVVNVPPQGGRKHPDQKMIPVNTKNILFICGGAFDGIEKKIAQRLNTHVVGYNASRKTATIDKNNMMQYIAPQDLKSFGLIPEIIGRLPVLTYLNPLDRNALRAILTEPKNSIIKQYIKLFEMDGVKLTFQPEVYEYIVDKAVEYKLGARGLRSIVETIMMDVMFEIPSEDQKEYEVTLDYAKHQLEKANLARLQTA.

The 52-residue stretch at 1 to 52 (MAESKNNKKRCSFCGRSENEVGFLITGMNGYICDSCATQAYEITQEAMGAGK) folds into the ClpX-type ZB domain. Positions 11, 14, 33, and 36 each coordinate Zn(2+). 121-128 (STGTGKTL) contacts ATP.

It belongs to the ClpX chaperone family. As to quaternary structure, component of the ClpX-ClpP complex. Forms a hexameric ring that, in the presence of ATP, binds to fourteen ClpP subunits assembled into a disk-like structure with a central cavity, resembling the structure of eukaryotic proteasomes.

Functionally, ATP-dependent specificity component of the Clp protease. It directs the protease to specific substrates. Can perform chaperone functions in the absence of ClpP. The protein is ATP-dependent Clp protease ATP-binding subunit ClpX of Bacteroides fragilis (strain ATCC 25285 / DSM 2151 / CCUG 4856 / JCM 11019 / LMG 10263 / NCTC 9343 / Onslow / VPI 2553 / EN-2).